The primary structure comprises 793 residues: MGVWLNRDEFIRDVKRISLCLLVLYVVIVVGTDQNFYSLLGVSKTASSREIRQAFKKLALKLHPDKNPNNPNAHGDFLKINRAYEVLKDEDLRKKYDKYGEKGLEDNQGGQYESWSYYRYDFGIYDDDPEIITLERREFDAAVNSGELWFVNFYSPGCSHCHDLAPTWREFAKEVDGLLRIGAVNCGDDRMLCRMKGVNSYPSLFIFRSGMAAVKYNGDRSKESLVSFAMQHVRTTVTELSTGNFVNAIETAFAAGIGWLITFCFKGEDCLTPQTRLRLSGMLDGLVNVGWVDCDTQDSLCKSLDATASTTAYFPPGATLNNKEKSSVLFLNSLDAKEIYMEIIHNLPDFELLSANKLEDRLAHHRWLVFFHFGKNENANDPELKKLKTLLKNEHIQVGRFDCSSAPGICSDLYVFQSCLAVFKGQGTKEYEIHHGKKILYDILAFAKESVNSHVTTLGPQNFPASDKEPWLVDFFAPWCPPCRALLPELRKASTLLYGQLKVGTLDCTIHEGLCNMYNIQAYPTTVVFNQSSVHEYEGHHSAEQILEFIEDLRNPSVVSLTPTTFNELVKQRKHDEVWMVDFYSPWCHPCQVLMPEWKRMARTLTGLINVGSVDCQQYHSFCTQENVQRYPEIRFYPQKSSRAYQYHSYNGWNRDAYSLRSWGLGFLPQASIDLTPQTFNEKVLQGKTHWVIDFYAPWCGPCQNFAPEFELLARMIKGKVKAGKVDCQAYPQTCQKAGIRAYPSVKLYLYERAKKSIWEEQINSRDAKTIAALIYGKLETFQSQVKRNKDEL.

The first 32 residues, 1 to 32 (MGVWLNRDEFIRDVKRISLCLLVLYVVIVVGT), serve as a signal peptide directing secretion. Positions 35 to 100 (NFYSLLGVSK…DLRKKYDKYG (66 aa)) constitute a J domain. The Thioredoxin 1 domain occupies 130-232 (EIITLERREF…ESLVSFAMQH (103 aa)). Cysteines 158 and 161 form a disulfide. 2 trxb regions span residues 235 to 350 (TTVT…LPDF) and 348 to 463 (PDFE…PQNF). 3 Thioredoxin domains span residues 454–553 (HVTT…IEDL), 557–665 (SVVS…SWGL), and 671–776 (ASID…ALIY). Cysteines 480 and 483 form a disulfide. A glycan (N-linked (GlcNAc...) asparagine) is linked at N530. Cystine bridges form between C588–C591 and C700–C703. Positions 790–793 (KDEL) match the Prevents secretion from ER motif.

In terms of assembly, interacts with HSPA5 (via its J domain). Interacts with EDEM1.

It localises to the endoplasmic reticulum lumen. Endoplasmic reticulum disulfide reductase involved both in the correct folding of proteins and degradation of misfolded proteins. Required for efficient folding of proteins in the endoplasmic reticulum by catalyzing the removal of non-native disulfide bonds formed during the folding of proteins, such as LDLR. Also involved in endoplasmic reticulum-associated degradation (ERAD) by reducing incorrect disulfide bonds in misfolded glycoproteins recognized by EDEM1. Interaction with HSPA5 is required its activity, not for the disulfide reductase activity, but to facilitate the release of DNAJC10 from its substrate. Promotes apoptotic signaling pathway in response to endoplasmic reticulum stress. The protein is DnaJ homolog subfamily C member 10 (Dnajc10) of Rattus norvegicus (Rat).